A 1034-amino-acid polypeptide reads, in one-letter code: Protein ITPRID1 (1034 aa).

Disordered regions lie at residues 223 to 290 (KTQQ…PTKP), 442 to 486 (QVSS…KSMT), and 624 to 678 (QSSL…SSWS). 2 stretches are compositionally biased toward polar residues: residues 443-453 (VSSMTGSQSPT) and 465-476 (HSPASQQDSLQE). The span at 477 to 486 (SYGSKSKSMT) shows a compositional bias: low complexity. A compositionally biased stretch (polar residues) spans 669 to 678 (TDSNAASSWS). Residues 843–902 (EMETMKMVCQSFREHLEEIEQHFMGQQALYPRDMSEEEREEAEYLRTLREALRQQVAELA) are a coiled coil.

The chain is Protein ITPRID1 (Itprid1) from Mus musculus (Mouse).